Reading from the N-terminus, the 507-residue chain is Hexokinase-5 (507 aa).

Residues 4–24 (AAAVGTAVVVAAAVGVAVVLA) form a helical membrane-spanning segment. The Hexokinase domain occupies 44–498 (RKVAAVIEDV…SGIGAALLAA (455 aa)). The tract at residues 99-237 (TGNEQGLFYA…GLDMKIAALV (139 aa)) is hexokinase small subdomain. G113, T114, and N115 together coordinate ADP. Positions 203, 204, 238, and 239 each coordinate D-glucose. The segment at 238-487 (NDTVGTLAGG…SSVVTKLAND (250 aa)) is hexokinase large subdomain. T262 provides a ligand contact to ADP. 3 residues coordinate D-glucose: N265, E293, and E324. An ADP-binding site is contributed by G452.

It belongs to the hexokinase family. Expressed in roots, leaves, flowers, immature seeds, endosperm and seed coat.

Its subcellular location is the plastid. It is found in the chloroplast outer membrane. The enzyme catalyses a D-hexose + ATP = a D-hexose 6-phosphate + ADP + H(+). It catalyses the reaction D-fructose + ATP = D-fructose 6-phosphate + ADP + H(+). It carries out the reaction D-glucose + ATP = D-glucose 6-phosphate + ADP + H(+). It participates in carbohydrate metabolism; hexose metabolism. It functions in the pathway carbohydrate degradation; glycolysis; D-glyceraldehyde 3-phosphate and glycerone phosphate from D-glucose: step 1/4. Functionally, fructose and glucose phosphorylating enzyme. Functions as a glucose sensor for plant growth and photosynthesis. Is essential for pollen development, germination, and tube growth. Its activity is necessary for the starch utilization pathway during pollen germination and tube growth, as well as for starch biosynthesis during pollen maturation. This is Hexokinase-5 (HXK5) from Oryza sativa subsp. japonica (Rice).